The following is a 263-amino-acid chain: Ribonuclease HII (263 aa).

The RNase H type-2 domain maps to 71 to 262 (QAIAGIDEVG…VKSMCCDSTN (192 aa)). 3 residues coordinate a divalent metal cation: Asp77, Glu78, and Asp172.

It belongs to the RNase HII family. Requires Mn(2+) as cofactor. The cofactor is Mg(2+).

Its subcellular location is the cytoplasm. It carries out the reaction Endonucleolytic cleavage to 5'-phosphomonoester.. Functionally, endonuclease that specifically degrades the RNA of RNA-DNA hybrids. This chain is Ribonuclease HII, found in Streptococcus pyogenes serotype M5 (strain Manfredo).